An 80-amino-acid polypeptide reads, in one-letter code: Probable small nuclear ribonucleoprotein G (80 aa).

The Sm domain occupies 5-76 (GQPPDLKKYM…IVTVEALEPV (72 aa)).

The protein belongs to the snRNP Sm proteins family.

It localises to the nucleus. Functionally, probable common Sm protein, is found in U1 and U2 snRNPs and may be part of the spliceosome. This is Probable small nuclear ribonucleoprotein G from Arabidopsis thaliana (Mouse-ear cress).